Reading from the N-terminus, the 881-residue chain is MTGNELRERFLKFFASKGHTIVHSSSLVPANDPTLLFTNAGMVQFKDVYLGLDRRPFTRATTAQKCVRAGGKHNDLDTVGRTARHHTFFEMLGNFSFGDYFKREAITYAWEFLTRVLELPPERLWVTVYQEDDEAYQLWQEIAGIPAERIVRMGEKDNFWAMGDTGPCGPCSEIIYDRGPEHACSSTPCALGACDCDRWLEIWNLVFMQYERDSNGNLSPLPRPSIDTGMGLERVASVLQGVDSNFDTDLIAPLIKAVEKITGRTYDPGEAGFPFRVIADHARSCTFLIADGILPGNEGRSYVLRRILRRAARFGKALGIDEPFLYRLVDTVVAIMGGAYPEVAEQQEHIARVIEQEEIRFHETLNDGLKVLNGILERARQEGREVVSGLEAFTLYDTYGFPLDLTEEIAGEGGFKVDRDGFEKAMAAQRERARAAREDVKAYDFALAFAGALEDISGTAFTGYDQLEDKGTVLALFQEGARVTSLEANATGYVVLDRTPCYPEGGGQVGDRGELKWSGGQARVEDTRRLPDGKIVHQINVTAGTLVVGQEVEIAVDRERRQATARNHTVTHLLHRALKNILGEHVNQAGSLVTPERLRFDFTHFAPLTGEELRAVEAEVNQKILANLPVTTLETSYQEAKAMGATALFGEKYGERVRVVKIDAYSMELCGGTHLGSTSEAGSFRLVSESGIGAGVRRVEAVTGAAALEMALQDRQELATIAGLLKVPPDQAIQRVRHLLEQNKENERELAQLRNELASYTIDKLLDRVQEVAGVPVLPARVQITDPEALREMAERLRSRLGSGVVILGSQHNGRVNFVAMVSKDLVQRGIHAGNLLREVARIASGGGGGRADMAQAGGKDPGKLDQALAYSLKVVAAQVR.

The Zn(2+) site is built by His-568, His-572, Cys-670, and His-674.

It belongs to the class-II aminoacyl-tRNA synthetase family. Zn(2+) is required as a cofactor.

It localises to the cytoplasm. The enzyme catalyses tRNA(Ala) + L-alanine + ATP = L-alanyl-tRNA(Ala) + AMP + diphosphate. In terms of biological role, catalyzes the attachment of alanine to tRNA(Ala) in a two-step reaction: alanine is first activated by ATP to form Ala-AMP and then transferred to the acceptor end of tRNA(Ala). Also edits incorrectly charged Ser-tRNA(Ala) and Gly-tRNA(Ala) via its editing domain. This Moorella thermoacetica (strain ATCC 39073 / JCM 9320) protein is Alanine--tRNA ligase.